Reading from the N-terminus, the 147-residue chain is Deoxyuridine 5'-triphosphate nucleotidohydrolase (147 aa).

Arg-24 serves as a coordination point for Mg(2+). Residues 68 to 70 (PRS), 82 to 85 (GVID), Tyr-88, Gly-93, Ile-95, and Arg-111 contribute to the dUTP site.

Belongs to the dUTPase family. Requires Mg(2+) as cofactor.

The enzyme catalyses dUTP + H2O = dUMP + diphosphate + H(+). Functionally, this enzyme is involved in nucleotide metabolism: it produces dUMP, the immediate precursor of thymidine nucleotides and it decreases the intracellular concentration of dUTP so that uracil cannot be incorporated into DNA. This chain is Deoxyuridine 5'-triphosphate nucleotidohydrolase (OPG046), found in Homo sapiens (Human).